Here is a 643-residue protein sequence, read N- to C-terminus: Threonine--tRNA ligase (643 aa).

The TGS domain occupies 1–61 (MPIITLPDGS…SEDSSLEIIT (61 aa)). Positions 243–534 (DHRRIGKALD…ITEEYAGFFP (292 aa)) are catalytic. The Zn(2+) site is built by cysteine 334, histidine 385, and histidine 511.

The protein belongs to the class-II aminoacyl-tRNA synthetase family. As to quaternary structure, homodimer. Requires Zn(2+) as cofactor.

The protein resides in the cytoplasm. The catalysed reaction is tRNA(Thr) + L-threonine + ATP = L-threonyl-tRNA(Thr) + AMP + diphosphate + H(+). Functionally, catalyzes the attachment of threonine to tRNA(Thr) in a two-step reaction: L-threonine is first activated by ATP to form Thr-AMP and then transferred to the acceptor end of tRNA(Thr). Also edits incorrectly charged L-seryl-tRNA(Thr). The sequence is that of Threonine--tRNA ligase from Actinobacillus pleuropneumoniae serotype 7 (strain AP76).